Consider the following 139-residue polypeptide: MANSASGLAVNDECKFKFQELKTRRGFRFIVFKIDDKAMEIKVERLGQTAEGYEDFAATLPADECRYAVYDLDFVTDENCQKSKIFFFSWSPDTARTRSKMLYASSKDRFRRELDGIQCEIQATDPSEMSLDIIRARAH.

The region spanning 7–139 is the ADF-H domain; it reads GLAVNDECKF…SLDIIRARAH (133 aa).

Belongs to the actin-binding proteins ADF family.

Its function is as follows. Actin-depolymerizing protein. Severs actin filaments (F-actin) and binds to actin monomers. The chain is Actin-depolymerizing factor 9 (ADF9) from Oryza sativa subsp. japonica (Rice).